Consider the following 1208-residue polypeptide: Putative protease AXL1 (1208 aa).

Residue H68 coordinates Zn(2+). E71 functions as the Proton acceptor in the catalytic mechanism. Zn(2+)-binding residues include H72 and E156. S262 carries the phosphoserine modification.

Belongs to the peptidase M16 family. Interacts with BUD5. It depends on Zn(2+) as a cofactor.

The protein localises to the bud neck. Its function is as follows. Probable protease. Involved in axial budding. The protein is Putative protease AXL1 (AXL1) of Saccharomyces cerevisiae (strain ATCC 204508 / S288c) (Baker's yeast).